Here is a 443-residue protein sequence, read N- to C-terminus: Xaa-Pro dipeptidase (443 aa).

5 residues coordinate Mn(2+): Asp-246, Asp-257, His-339, Glu-384, and Glu-423.

Belongs to the peptidase M24B family. Bacterial-type prolidase subfamily. The cofactor is Mn(2+).

It carries out the reaction Xaa-L-Pro dipeptide + H2O = an L-alpha-amino acid + L-proline. Functionally, splits dipeptides with a prolyl residue in the C-terminal position. The sequence is that of Xaa-Pro dipeptidase from Serratia proteamaculans (strain 568).